Reading from the N-terminus, the 336-residue chain is Alcohol dehydrogenase, propanol-preferring (336 aa).

Zn(2+) is bound by residues Cys-37, His-58, Cys-89, Cys-92, Cys-95, Cys-103, and Cys-145.

Belongs to the zinc-containing alcohol dehydrogenase family. Zn(2+) serves as cofactor.

It carries out the reaction a primary alcohol + NAD(+) = an aldehyde + NADH + H(+). The catalysed reaction is a secondary alcohol + NAD(+) = a ketone + NADH + H(+). Functionally, preferred specificity is towards 1-propanol. This is Alcohol dehydrogenase, propanol-preferring (adhP) from Escherichia coli (strain K12).